The chain runs to 1767 residues: MNKGLFEKRCKYSIRKFSLGVASVMIGATFFGTSPVLADSVQSGSTANLPADLATALATAKENDGHDFEAPKVGEDQGSPEVTDGPKTEEELLALEKEKPAEEKPKEDKPAAAKPETPKTVTPEWQTVEKKEQQGTVTIREEKGVRYNQLSSTAQNDNAGKPALFEKKGLTVDANGNATVDLTFKDDSEKGKSRFGVFLKFKDTKNNVFVGYDKDGWFWEYKSPTTSTWYRGSRVAAPETGSTNRLSITLKSDGQLNASNNDVNLFDTVTLPAAVNDHLKNEKKILLKAGSYDDERTVVSVKTDNQEGVKTEDTPAEKETGPEVDDSKVTYDTIQSKVLKAVIDQAFPRVKEYSLNGHTLPGQVQQFNQVFINNHRITPEVTYKKINETTAEYLMKLRDDAHLINAEMTVRLQVVDNQLHFDVTKIVNHNQVTPGQKIDDERKLLSSISFLGNALVSVSSDQTGAKFDGATMSNNTHVSGDDHIDVTNPMKDLAKGYMYGFVSTDKLAAGVWSNSQNSYGGGSNDWTRLTAYKETVGNANYVGIHSSEWQWEKAYKGIVFPEYTKELPSAKVVITEDANADKKVDWQDGAIAYRSIMNNPQGWKKVKDITAYRIAMNFGSQAQNPFLMTLDGIKKINLHTDGLGQGVLLKGYGSEGHDSGHLNYADIGKRIGGVEDFKTLIEKAKKYGAHLGIHVNASETYPESKYFNEKILRKNPDGSYSYGWNWLDQGINIDAAYDLAHGRLARWEDLKKKLGDGLDFIYVDVWGNGQSGDNGAWATHVLAKEINKQGWRFAIEWGHGGEYDSTFHHWAADLTYGGYTNKGINSAITRFIRNHQKDAWVGDYRSYGGAANYPLLGGYSMKDFEGWQGRSDYNGYVTNLFAHDVMTKYFQHFTVSKWENGTPVTMTDNGSTYKWTPEMRVELVDADNNKVVVTRKSNDVNSPQYRERTVTLNGRVIQDGSAYLTPWNWDANGKKLSTDKEKMYYFNTQAGATTWTLPSDWAKSKVYLYKLTDQGKTEEQELTVKDGKITLDLLANQPYVLYRSKQTNPEMSWSEGMHIYDQGFNSGTLKHWTISGDASKAEIVKSQGANDMLRIQGNKEKVSLTQKLTGLKPNTKYAVYVGVDNRSNAKASITVNTGEKEVTTYTNKSLALNYVKAYAHNTRRNNATVDDTSYFQNMYAFFTTGSDVSNVTLTLSREAGDEATYFDEIRTFENNSSMYGDKHDTGKGTFKQDFENVAQGIFPFVVGGVEGVEDNRTHLSEKHDPYTQRGWNGKKVDDVIEGNWSLKTNGLVSRRNLVYQTIPQNFRFEAGKTYRVTFEYEAGSDNTYAFVVGKGEFQSGRRGTQASNLEMHELPNTWTDSKKAKKATFLVTGAETGDTWVGIYSTGNASNTRGDSGGNANFRGYNDFMMDNLQIEEITLTGKMLTENALKNYLPTVAMTNYTKESMDALKEAVFNLSQADDDISVEEARAEIAKIEALKNALVQKKTALVADDFASLTAPAQAQEGLANAFDGNLSSLWHTSWGGGDVGKPATMVLKEATEITGLRYVPRGSGSNGNLRDVKLVVTDESGKEHTFTATDWPDNNKPKDIDFGKTIKAKKIVLTGTKTYGDGGDKYQSAAELIFTRPQVAETPLDLSGYEAALAKAQKLTDKDNQEEVASVQASMKYATDNHLLTERMVEYFADYLNQLKDSATKPDAPTVEKPEFKLSSVASDQGKTPDYKQEIARPETPEQILPATGESQFDTALFLASVSLALSALFVVKTKKD.

Positions 1–39 (MNKGLFEKRCKYSIRKFSLGVASVMIGATFFGTSPVLAD) are cleaved as a signal peptide. 2 stretches are compositionally biased toward basic and acidic residues: residues 63-75 (NDGHDFEAPKVGE) and 84-111 (DGPKTEEELLALEKEKPAEEKPKEDKPA). Disordered stretches follow at residues 63–137 (NDGH…QGTV) and 301–324 (VKTDNQEGVKTEDTPAEKETGPEV). The span at 112–124 (AAKPETPKTVTPE) shows a compositional bias: low complexity. 2 stretches are compositionally biased toward basic and acidic residues: residues 127-137 (TVEKKEQQGTV) and 304-324 (DNQEGVKTEDTPAEKETGPEV). Residues Asp-577, Asn-579, Asp-581, Lys-583, and Asp-588 each coordinate Ca(2+). The catalytic stretch occupies residues 602 to 893 (GWKKVKDITA…DVMTKYFQHF (292 aa)). Asp-658 is a substrate binding site. Residue Asp-764 is the Nucleophile of the active site. The Proton donor/acceptor role is filled by Glu-796. Residues Asp-1233, Glu-1235, Glu-1281, Trp-1284, and Asp-1411 each contribute to the Ca(2+) site. Residues 1735–1739 (LPATG) carry the LPXTG sorting signal motif. Thr-1738 is modified (pentaglycyl murein peptidoglycan amidated threonine). Positions 1739–1767 (GESQFDTALFLASVSLALSALFVVKTKKD) are cleaved as a propeptide — removed by sortase.

The protein belongs to the glycosyl hydrolase 101 family. A subfamily.

The protein localises to the secreted. The protein resides in the cell wall. The enzyme catalyses a 3-O-[beta-D-galactosyl-(1-&gt;3)-N-acetyl-alpha-D-galactosaminyl]-L-threonyl-[protein] + H2O = beta-D-galactosyl-(1-&gt;3)-N-acetyl-D-galactosamine + L-threonyl-[protein]. The catalysed reaction is a 3-O-[beta-D-galactosyl-(1-&gt;3)-N-acetyl-alpha-D-galactosaminyl]-L-seryl-[protein] + H2O = beta-D-galactosyl-(1-&gt;3)-N-acetyl-D-galactosamine + L-seryl-[protein]. Its function is as follows. Involved in the breakdown of mucin-type O-linked glycans. Specifically removes the T-antigen disaccharide (Gal-beta-1,3-GalNAc-alpha) from extracellular host glycoproteins. Representative of a broadly important class of virulence factors. The polypeptide is Endo-alpha-N-acetylgalactosaminidase (Streptococcus pneumoniae (strain ATCC BAA-255 / R6)).